The following is a 227-amino-acid chain: Ribonuclease 3 (227 aa).

In terms of domain architecture, RNase III spans 4-133; that stretch reads FEKLEKLLSY…LIAAIYLDSN (130 aa). Glutamate 46 is a Mg(2+) binding site. Residue aspartate 50 is part of the active site. Asparagine 119 and glutamate 122 together coordinate Mg(2+). Residue glutamate 122 is part of the active site. A DRBM domain is found at 158–226; sequence DPKTALQEWA…ARSLLHRLKN (69 aa).

It belongs to the ribonuclease III family. Homodimer. It depends on Mg(2+) as a cofactor.

The protein resides in the cytoplasm. The catalysed reaction is Endonucleolytic cleavage to 5'-phosphomonoester.. Functionally, digests double-stranded RNA. Involved in the processing of primary rRNA transcript to yield the immediate precursors to the large and small rRNAs (23S and 16S). Processes some mRNAs, and tRNAs when they are encoded in the rRNA operon. Processes pre-crRNA and tracrRNA of type II CRISPR loci if present in the organism. The chain is Ribonuclease 3 from Rickettsia africae (strain ESF-5).